Consider the following 1391-residue polypeptide: DNA-directed RNA polymerase subunit beta' (1391 aa).

C70, C72, C85, and C88 together coordinate Zn(2+). Positions 461, 463, and 465 each coordinate Mg(2+). Zn(2+)-binding residues include C809, C882, C889, and C892.

Belongs to the RNA polymerase beta' chain family. As to quaternary structure, the RNAP catalytic core consists of 2 alpha, 1 beta, 1 beta' and 1 omega subunit. When a sigma factor is associated with the core the holoenzyme is formed, which can initiate transcription. Requires Mg(2+) as cofactor. Zn(2+) serves as cofactor.

It carries out the reaction RNA(n) + a ribonucleoside 5'-triphosphate = RNA(n+1) + diphosphate. DNA-dependent RNA polymerase catalyzes the transcription of DNA into RNA using the four ribonucleoside triphosphates as substrates. The protein is DNA-directed RNA polymerase subunit beta' of Zymomonas mobilis subsp. mobilis (strain ATCC 31821 / ZM4 / CP4).